The sequence spans 142 residues: ATP synthase epsilon chain (142 aa).

This sequence belongs to the ATPase epsilon chain family. As to quaternary structure, F-type ATPases have 2 components, CF(1) - the catalytic core - and CF(0) - the membrane proton channel. CF(1) has five subunits: alpha(3), beta(3), gamma(1), delta(1), epsilon(1). CF(0) has three main subunits: a, b and c.

Its subcellular location is the cell inner membrane. Its function is as follows. Produces ATP from ADP in the presence of a proton gradient across the membrane. This Koribacter versatilis (strain Ellin345) protein is ATP synthase epsilon chain.